The sequence spans 153 residues: Superoxide dismutase [Cu-Zn] (153 aa).

Residues His45, His47, and His62 each coordinate Cu cation. Cys56 and Cys145 are disulfide-bonded. Residues His62, His70, His79, and Asp82 each contribute to the Zn(2+) site. His119 contacts Cu cation.

It belongs to the Cu-Zn superoxide dismutase family. As to quaternary structure, homodimer. Cu cation is required as a cofactor. Zn(2+) serves as cofactor.

The protein resides in the cytoplasm. It catalyses the reaction 2 superoxide + 2 H(+) = H2O2 + O2. In terms of biological role, destroys radicals which are normally produced within the cells and which are toxic to biological systems. This is Superoxide dismutase [Cu-Zn] (Sod) from Chymomyza amoena.